We begin with the raw amino-acid sequence, 249 residues long: 2,3-bisphosphoglycerate-dependent phosphoglycerate mutase (249 aa).

Substrate-binding positions include 8-15 (RHGESQWN), 21-22 (TG), R60, 87-90 (ERHY), K98, 114-115 (RR), and 183-184 (GN). The Tele-phosphohistidine intermediate role is filled by H9. E87 serves as the catalytic Proton donor/acceptor.

This sequence belongs to the phosphoglycerate mutase family. BPG-dependent PGAM subfamily.

It catalyses the reaction (2R)-2-phosphoglycerate = (2R)-3-phosphoglycerate. Its pathway is carbohydrate degradation; glycolysis; pyruvate from D-glyceraldehyde 3-phosphate: step 3/5. Functionally, catalyzes the interconversion of 2-phosphoglycerate and 3-phosphoglycerate. The sequence is that of 2,3-bisphosphoglycerate-dependent phosphoglycerate mutase from Pelodictyon phaeoclathratiforme (strain DSM 5477 / BU-1).